We begin with the raw amino-acid sequence, 163 residues long: Beta-lactoglobulin-2 (163 aa).

2 disulfides stabilise this stretch: Cys-66–Cys-161 and Cys-106–Cys-120.

The protein belongs to the calycin superfamily. Lipocalin family. As to quaternary structure, monomer.

Its subcellular location is the secreted. Functionally, lactoglobulin is the primary component of whey, it binds retinol and is probably involved in the transport of that molecule. The sequence is that of Beta-lactoglobulin-2 (LGB2) from Equus asinus (Donkey).